We begin with the raw amino-acid sequence, 547 residues long: G protein-coupled receptor associated sorting protein 3 (547 aa).

Basic residues-rich tracts occupy residues 1–10 (MTGTKNKTRA) and 38–48 (AKTRAKAKAKT). The interval 1-53 (MTGTKNKTRAQAKTEKKPVTQAKAGAEREATGVVRPVAKTRAKAKAKTGSKTD) is disordered.

Belongs to the GPRASP family. In terms of assembly, homodimer.

It localises to the cytoplasm. The protein localises to the nucleus. Its function is as follows. Survival and differentiation promoting protein that plays a role in the regulation of neurosynaptogenesis. Induces phosphatase PP2A activity which results in APP dephosphorylation and inhibits BACE1-mediated processing of APP. The chain is G protein-coupled receptor associated sorting protein 3 (GPRASP3) from Macaca fascicularis (Crab-eating macaque).